The sequence spans 697 residues: Elongation factor G (697 aa).

The tr-type G domain maps to 8–290; the sequence is ERYRNFGIMA…AVVDYLPSPL (283 aa). Residues 17–24, 88–92, and 142–145 each bind GTP; these read AHIDAGKT, DTPGH, and NKLD.

Belongs to the TRAFAC class translation factor GTPase superfamily. Classic translation factor GTPase family. EF-G/EF-2 subfamily.

It localises to the cytoplasm. Its function is as follows. Catalyzes the GTP-dependent ribosomal translocation step during translation elongation. During this step, the ribosome changes from the pre-translocational (PRE) to the post-translocational (POST) state as the newly formed A-site-bound peptidyl-tRNA and P-site-bound deacylated tRNA move to the P and E sites, respectively. Catalyzes the coordinated movement of the two tRNA molecules, the mRNA and conformational changes in the ribosome. This Sphingopyxis alaskensis (strain DSM 13593 / LMG 18877 / RB2256) (Sphingomonas alaskensis) protein is Elongation factor G.